We begin with the raw amino-acid sequence, 299 residues long: Oxygen-dependent coproporphyrinogen-III oxidase (299 aa).

Ser-92 is a substrate binding site. Mn(2+) is bound by residues His-96 and His-106. Residue His-106 is the Proton donor of the active site. A substrate-binding site is contributed by Asn-108–Arg-110. Positions 145 and 175 each coordinate Mn(2+). An important for dimerization region spans residues Tyr-240 to Glu-275. A substrate-binding site is contributed by Gly-258–Arg-260.

The protein belongs to the aerobic coproporphyrinogen-III oxidase family. As to quaternary structure, homodimer. Requires Mn(2+) as cofactor.

It is found in the cytoplasm. The enzyme catalyses coproporphyrinogen III + O2 + 2 H(+) = protoporphyrinogen IX + 2 CO2 + 2 H2O. It participates in porphyrin-containing compound metabolism; protoporphyrin-IX biosynthesis; protoporphyrinogen-IX from coproporphyrinogen-III (O2 route): step 1/1. Its function is as follows. Involved in the heme biosynthesis. Catalyzes the aerobic oxidative decarboxylation of propionate groups of rings A and B of coproporphyrinogen-III to yield the vinyl groups in protoporphyrinogen-IX. The protein is Oxygen-dependent coproporphyrinogen-III oxidase of Escherichia coli (strain SMS-3-5 / SECEC).